The following is a 182-amino-acid chain: Large ribosomal subunit protein uL5 (182 aa).

It belongs to the universal ribosomal protein uL5 family. In terms of assembly, part of the 50S ribosomal subunit; part of the 5S rRNA/L5/L18/L25 subcomplex. Contacts the 5S rRNA and the P site tRNA. Forms a bridge to the 30S subunit in the 70S ribosome.

In terms of biological role, this is one of the proteins that bind and probably mediate the attachment of the 5S RNA into the large ribosomal subunit, where it forms part of the central protuberance. In the 70S ribosome it contacts protein S13 of the 30S subunit (bridge B1b), connecting the 2 subunits; this bridge is implicated in subunit movement. Contacts the P site tRNA; the 5S rRNA and some of its associated proteins might help stabilize positioning of ribosome-bound tRNAs. The sequence is that of Large ribosomal subunit protein uL5 from Borrelia turicatae (strain 91E135).